The sequence spans 814 residues: G-type lectin S-receptor-like serine/threonine-protein kinase At1g61400 (814 aa).

The signal sequence occupies residues Met-1–Ala-34. Residues Glu-35–Phe-154 enclose the Bulb-type lectin domain. The Extracellular segment spans residues Glu-35 to Thr-436. Asn-63, Asn-104, Asn-127, and Asn-246 each carry an N-linked (GlcNAc...) asparagine glycan. The region spanning Pro-288–Glu-324 is the EGF-like; atypical domain. 2 disulfides stabilise this stretch: Cys-292–Cys-304 and Cys-298–Cys-312. N-linked (GlcNAc...) asparagine glycans are attached at residues Asn-330, Asn-346, and Asn-385. Residues Cys-343–Arg-425 form the PAN domain. Cystine bridges form between Cys-378/Cys-399 and Cys-382/Cys-388. The chain crosses the membrane as a helical span at residues Ile-437 to Phe-457. Over Trp-458–Arg-814 the chain is Cytoplasmic. In terms of domain architecture, Protein kinase spans Phe-500 to Phe-785. Residues Leu-506–Val-514 and Lys-528 each bind ATP. Ser-534 and Ser-549 each carry phosphoserine. A caM-binding region spans residues Lys-589–Ile-606. The active-site Proton acceptor is the Asp-625. Phosphoserine occurs at positions 629 and 642. Phosphothreonine is present on Thr-659. 2 positions are modified to phosphoserine: Ser-702 and Ser-796.

It belongs to the protein kinase superfamily. Ser/Thr protein kinase family.

Its subcellular location is the cell membrane. It catalyses the reaction L-seryl-[protein] + ATP = O-phospho-L-seryl-[protein] + ADP + H(+). The enzyme catalyses L-threonyl-[protein] + ATP = O-phospho-L-threonyl-[protein] + ADP + H(+). This is G-type lectin S-receptor-like serine/threonine-protein kinase At1g61400 from Arabidopsis thaliana (Mouse-ear cress).